We begin with the raw amino-acid sequence, 397 residues long: Protein irld-34 (397 aa).

This chain is Protein irld-34, found in Caenorhabditis elegans.